The primary structure comprises 51 residues: Large ribosomal subunit protein eL39 (51 aa).

The protein belongs to the eukaryotic ribosomal protein eL39 family.

This Methanothermobacter thermautotrophicus (strain ATCC 29096 / DSM 1053 / JCM 10044 / NBRC 100330 / Delta H) (Methanobacterium thermoautotrophicum) protein is Large ribosomal subunit protein eL39 (rpl39e).